Reading from the N-terminus, the 173-residue chain is 6,7-dimethyl-8-ribityllumazine synthase (173 aa).

5-amino-6-(D-ribitylamino)uracil-binding positions include F24, 58-60, and 82-84; these read ALE and AVI. 87-88 is a (2S)-2-hydroxy-3-oxobutyl phosphate binding site; sequence ET. The Proton donor role is filled by H90. N115 provides a ligand contact to 5-amino-6-(D-ribitylamino)uracil. R129 contacts (2S)-2-hydroxy-3-oxobutyl phosphate. Positions 150 to 173 are disordered; sequence TLDQLSDDEEDEEDEDDEDEEERA. A compositionally biased stretch (acidic residues) spans 154-173; that stretch reads LSDDEEDEEDEDDEDEEERA.

The protein belongs to the DMRL synthase family.

The enzyme catalyses (2S)-2-hydroxy-3-oxobutyl phosphate + 5-amino-6-(D-ribitylamino)uracil = 6,7-dimethyl-8-(1-D-ribityl)lumazine + phosphate + 2 H2O + H(+). The protein operates within cofactor biosynthesis; riboflavin biosynthesis; riboflavin from 2-hydroxy-3-oxobutyl phosphate and 5-amino-6-(D-ribitylamino)uracil: step 1/2. Functionally, catalyzes the formation of 6,7-dimethyl-8-ribityllumazine by condensation of 5-amino-6-(D-ribitylamino)uracil with 3,4-dihydroxy-2-butanone 4-phosphate. This is the penultimate step in the biosynthesis of riboflavin. In Burkholderia mallei (strain NCTC 10247), this protein is 6,7-dimethyl-8-ribityllumazine synthase.